The primary structure comprises 307 residues: Coproporphyrin III ferrochelatase (307 aa).

Residues Tyr-12, Arg-29, 45–46 (RY), Ser-53, and Tyr-124 each bind Fe-coproporphyrin III. Fe(2+) is bound by residues His-181 and Glu-263.

It belongs to the ferrochelatase family.

The protein resides in the cytoplasm. It catalyses the reaction Fe-coproporphyrin III + 2 H(+) = coproporphyrin III + Fe(2+). Its pathway is porphyrin-containing compound metabolism; protoheme biosynthesis. Functionally, involved in coproporphyrin-dependent heme b biosynthesis. Catalyzes the insertion of ferrous iron into coproporphyrin III to form Fe-coproporphyrin III. This Staphylococcus epidermidis (strain ATCC 12228 / FDA PCI 1200) protein is Coproporphyrin III ferrochelatase.